Reading from the N-terminus, the 530-residue chain is Glucose-6-phosphate isomerase (530 aa).

The Proton donor role is filled by Glu-347. Catalysis depends on residues His-378 and Lys-493.

The protein belongs to the GPI family.

The protein localises to the cytoplasm. The catalysed reaction is alpha-D-glucose 6-phosphate = beta-D-fructose 6-phosphate. It functions in the pathway carbohydrate biosynthesis; gluconeogenesis. It participates in carbohydrate degradation; glycolysis; D-glyceraldehyde 3-phosphate and glycerone phosphate from D-glucose: step 2/4. Its function is as follows. Catalyzes the reversible isomerization of glucose-6-phosphate to fructose-6-phosphate. The polypeptide is Glucose-6-phosphate isomerase (Chlamydia abortus (strain DSM 27085 / S26/3) (Chlamydophila abortus)).